A 326-amino-acid polypeptide reads, in one-letter code: Protein phosphatase PTC7 homolog fig (326 aa).

Residues 40 to 83 (VQGKSKPRSPHLTSPQCSPEHRPRRFRPPSASGRTAFSSAPRPK) form a disordered region. In terms of domain architecture, PPM-type phosphatase spans 64–314 (RFRPPSASGR…DDITVVLASV (251 aa)). Mn(2+)-binding residues include aspartate 91, glycine 92, and aspartate 236.

This sequence belongs to the PP2C family. Requires Mg(2+) as cofactor. Mn(2+) serves as cofactor.

It catalyses the reaction O-phospho-L-seryl-[protein] + H2O = L-seryl-[protein] + phosphate. The enzyme catalyses O-phospho-L-threonyl-[protein] + H2O = L-threonyl-[protein] + phosphate. The polypeptide is Protein phosphatase PTC7 homolog fig (Drosophila persimilis (Fruit fly)).